Consider the following 553-residue polypeptide: Meiotic expression up-regulated protein 18 (553 aa).

Positions 267 to 305 (SNETLCSNDSKHRIARLKNEDNTQKPISKKRKSKKASHK) are disordered. Basic and acidic residues predominate over residues 275-289 (DSKHRIARLKNEDNT). The segment covering 293 to 304 (ISKKRKSKKASH) has biased composition (basic residues).

The chain is Meiotic expression up-regulated protein 18 (meu18) from Schizosaccharomyces pombe (strain 972 / ATCC 24843) (Fission yeast).